We begin with the raw amino-acid sequence, 308 residues long: D-alanine--D-alanine ligase (308 aa).

The 201-residue stretch at 104–304 (KQALVPHGIP…YAELVERIVE (201 aa)) folds into the ATP-grasp domain. Position 131–187 (131–187 (LPRPYVLKPVNEGSSVGVAIVRDDSNYGNPISRDALGPWQQFDRLLAEPFIKGRELT)) interacts with ATP. The Mg(2+) site is built by aspartate 255, glutamate 271, and asparagine 273.

Belongs to the D-alanine--D-alanine ligase family. Mg(2+) is required as a cofactor. The cofactor is Mn(2+).

It localises to the cytoplasm. It carries out the reaction 2 D-alanine + ATP = D-alanyl-D-alanine + ADP + phosphate + H(+). It participates in cell wall biogenesis; peptidoglycan biosynthesis. Its function is as follows. Cell wall formation. The sequence is that of D-alanine--D-alanine ligase from Sphingopyxis alaskensis (strain DSM 13593 / LMG 18877 / RB2256) (Sphingomonas alaskensis).